The following is a 278-amino-acid chain: Large ribosomal subunit protein uL2c (278 aa).

2 disordered regions span residues serine 32 to glycine 56 and glutamine 203 to glycine 256. Over residues glycine 209–valine 220 the composition is skewed to basic residues.

This sequence belongs to the universal ribosomal protein uL2 family. In terms of assembly, part of the 50S ribosomal subunit.

Its subcellular location is the plastid. It localises to the chloroplast. This Chara vulgaris (Common stonewort) protein is Large ribosomal subunit protein uL2c (rpl2).